An 89-amino-acid polypeptide reads, in one-letter code: MPAPRYKSGSSKKVYRKAPGNSSIVHYRRKKQSKAVCGACGALLNGVPRGRAVEITKLAKTQKRPERAFGGNLCPKCVKKMMVIKARNF.

Residues 1-22 (MPAPRYKSGSSKKVYRKAPGNS) are disordered.

It belongs to the eukaryotic ribosomal protein eL34 family.

This is Large ribosomal subunit protein eL34 from Methanococcus maripaludis (strain C7 / ATCC BAA-1331).